A 417-amino-acid polypeptide reads, in one-letter code: Tyrosine--tRNA ligase (417 aa).

Residue Y39 coordinates L-tyrosine. Residues 44 to 53 carry the 'HIGH' region motif; that stretch reads PTASSLHVGH. L-tyrosine-binding residues include Y176 and Q180. The 'KMSKS' region signature appears at 236-240; sequence KMGKS. ATP is bound at residue K239. In terms of domain architecture, S4 RNA-binding spans 350–416; it reads VGVLSLIVRA…GKKKHVLVRP (67 aa).

It belongs to the class-I aminoacyl-tRNA synthetase family. TyrS type 1 subfamily. Homodimer.

Its subcellular location is the cytoplasm. It carries out the reaction tRNA(Tyr) + L-tyrosine + ATP = L-tyrosyl-tRNA(Tyr) + AMP + diphosphate + H(+). In terms of biological role, catalyzes the attachment of tyrosine to tRNA(Tyr) in a two-step reaction: tyrosine is first activated by ATP to form Tyr-AMP and then transferred to the acceptor end of tRNA(Tyr). The protein is Tyrosine--tRNA ligase of Agrobacterium fabrum (strain C58 / ATCC 33970) (Agrobacterium tumefaciens (strain C58)).